A 394-amino-acid chain; its full sequence is NAD(P)H-quinone oxidoreductase subunit H (394 aa).

This sequence belongs to the complex I 49 kDa subunit family. NDH-1 can be composed of about 15 different subunits; different subcomplexes with different compositions have been identified which probably have different functions.

Its subcellular location is the cellular thylakoid membrane. The enzyme catalyses a plastoquinone + NADH + (n+1) H(+)(in) = a plastoquinol + NAD(+) + n H(+)(out). It carries out the reaction a plastoquinone + NADPH + (n+1) H(+)(in) = a plastoquinol + NADP(+) + n H(+)(out). Its function is as follows. NDH-1 shuttles electrons from an unknown electron donor, via FMN and iron-sulfur (Fe-S) centers, to quinones in the respiratory and/or the photosynthetic chain. The immediate electron acceptor for the enzyme in this species is believed to be plastoquinone. Couples the redox reaction to proton translocation, and thus conserves the redox energy in a proton gradient. Cyanobacterial NDH-1 also plays a role in inorganic carbon-concentration. This Prochlorococcus marinus (strain NATL2A) protein is NAD(P)H-quinone oxidoreductase subunit H.